A 324-amino-acid chain; its full sequence is Phospho-N-acetylmuramoyl-pentapeptide-transferase (324 aa).

9 consecutive transmembrane segments (helical) span residues 13–33 (VLSA…IFIP), 59–79 (PTMG…IIGY), 85–105 (GMVV…DDIL), 121–141 (MILL…NIGT), 143–163 (IIIP…PLVV), 179–199 (IDGL…IVGF), 201–221 (TGHY…LGFL), 243–263 (AIAT…VGGI), and 303–323 (VKLV…GFIA).

It belongs to the glycosyltransferase 4 family. MraY subfamily. Mg(2+) serves as cofactor.

It localises to the cell membrane. It catalyses the reaction UDP-N-acetyl-alpha-D-muramoyl-L-alanyl-gamma-D-glutamyl-meso-2,6-diaminopimeloyl-D-alanyl-D-alanine + di-trans,octa-cis-undecaprenyl phosphate = di-trans,octa-cis-undecaprenyl diphospho-N-acetyl-alpha-D-muramoyl-L-alanyl-D-glutamyl-meso-2,6-diaminopimeloyl-D-alanyl-D-alanine + UMP. The protein operates within cell wall biogenesis; peptidoglycan biosynthesis. Catalyzes the initial step of the lipid cycle reactions in the biosynthesis of the cell wall peptidoglycan: transfers peptidoglycan precursor phospho-MurNAc-pentapeptide from UDP-MurNAc-pentapeptide onto the lipid carrier undecaprenyl phosphate, yielding undecaprenyl-pyrophosphoryl-MurNAc-pentapeptide, known as lipid I. The polypeptide is Phospho-N-acetylmuramoyl-pentapeptide-transferase (Clostridium botulinum (strain Alaska E43 / Type E3)).